The sequence spans 45 residues: Bacteriocin fulvocin-C (45 aa).

Its function is as follows. Bacteriocin. In Myxococcus fulvus, this protein is Bacteriocin fulvocin-C.